Consider the following 260-residue polypeptide: Triosephosphate isomerase (260 aa).

Residue 11-13 (NWK) coordinates substrate. His-103 functions as the Electrophile in the catalytic mechanism. Glu-175 functions as the Proton acceptor in the catalytic mechanism. Residues Gly-181, Ser-220, and 241–242 (GG) each bind substrate.

It belongs to the triosephosphate isomerase family. Homodimer.

It is found in the cytoplasm. The catalysed reaction is D-glyceraldehyde 3-phosphate = dihydroxyacetone phosphate. Its pathway is carbohydrate biosynthesis; gluconeogenesis. It participates in carbohydrate degradation; glycolysis; D-glyceraldehyde 3-phosphate from glycerone phosphate: step 1/1. Functionally, involved in the gluconeogenesis. Catalyzes stereospecifically the conversion of dihydroxyacetone phosphate (DHAP) to D-glyceraldehyde-3-phosphate (G3P). This chain is Triosephosphate isomerase, found in Shewanella woodyi (strain ATCC 51908 / MS32).